Consider the following 243-residue polypeptide: Pyridoxine 5'-phosphate synthase (243 aa).

Position 9 (N9) interacts with 3-amino-2-oxopropyl phosphate. Residue 11 to 12 (DH) coordinates 1-deoxy-D-xylulose 5-phosphate. R20 is a binding site for 3-amino-2-oxopropyl phosphate. H45 acts as the Proton acceptor in catalysis. R47 and H52 together coordinate 1-deoxy-D-xylulose 5-phosphate. E72 acts as the Proton acceptor in catalysis. Position 102 (T102) interacts with 1-deoxy-D-xylulose 5-phosphate. H193 serves as the catalytic Proton donor. Residues G194 and 215-216 (GH) each bind 3-amino-2-oxopropyl phosphate.

Belongs to the PNP synthase family. Homooctamer; tetramer of dimers.

It localises to the cytoplasm. It catalyses the reaction 3-amino-2-oxopropyl phosphate + 1-deoxy-D-xylulose 5-phosphate = pyridoxine 5'-phosphate + phosphate + 2 H2O + H(+). Its pathway is cofactor biosynthesis; pyridoxine 5'-phosphate biosynthesis; pyridoxine 5'-phosphate from D-erythrose 4-phosphate: step 5/5. Its function is as follows. Catalyzes the complicated ring closure reaction between the two acyclic compounds 1-deoxy-D-xylulose-5-phosphate (DXP) and 3-amino-2-oxopropyl phosphate (1-amino-acetone-3-phosphate or AAP) to form pyridoxine 5'-phosphate (PNP) and inorganic phosphate. This is Pyridoxine 5'-phosphate synthase from Yersinia pseudotuberculosis serotype I (strain IP32953).